A 1143-amino-acid polypeptide reads, in one-letter code: DNA-directed RNA polymerase subunit beta (1143 aa).

It belongs to the RNA polymerase beta chain family. In terms of assembly, in plastids the minimal PEP RNA polymerase catalytic core is composed of four subunits: alpha, beta, beta', and beta''. When a (nuclear-encoded) sigma factor is associated with the core the holoenzyme is formed, which can initiate transcription.

The protein localises to the plastid. The protein resides in the chloroplast. It catalyses the reaction RNA(n) + a ribonucleoside 5'-triphosphate = RNA(n+1) + diphosphate. In terms of biological role, DNA-dependent RNA polymerase catalyzes the transcription of DNA into RNA using the four ribonucleoside triphosphates as substrates. This chain is DNA-directed RNA polymerase subunit beta, found in Pyropia yezoensis (Susabi-nori).